Here is an 811-residue protein sequence, read N- to C-terminus: Glycerol-3-phosphate acyltransferase (811 aa).

The HXXXXD motif motif lies at 309-314 (CHRSHM).

This sequence belongs to the GPAT/DAPAT family.

The protein resides in the cell inner membrane. It catalyses the reaction sn-glycerol 3-phosphate + an acyl-CoA = a 1-acyl-sn-glycero-3-phosphate + CoA. It functions in the pathway phospholipid metabolism; CDP-diacylglycerol biosynthesis; CDP-diacylglycerol from sn-glycerol 3-phosphate: step 1/3. The protein is Glycerol-3-phosphate acyltransferase of Colwellia psychrerythraea (strain 34H / ATCC BAA-681) (Vibrio psychroerythus).